The following is a 217-amino-acid chain: 3,4-dihydroxy-2-butanone 4-phosphate synthase (217 aa).

Residues 37-38, Asp42, 150-154, and Glu174 contribute to the D-ribulose 5-phosphate site; these read RE and RGGHT. Glu38 is a binding site for Mg(2+). Position 153 (His153) interacts with Mg(2+).

Belongs to the DHBP synthase family. In terms of assembly, homodimer. It depends on Mg(2+) as a cofactor. Mn(2+) is required as a cofactor.

The catalysed reaction is D-ribulose 5-phosphate = (2S)-2-hydroxy-3-oxobutyl phosphate + formate + H(+). It participates in cofactor biosynthesis; riboflavin biosynthesis; 2-hydroxy-3-oxobutyl phosphate from D-ribulose 5-phosphate: step 1/1. Functionally, catalyzes the conversion of D-ribulose 5-phosphate to formate and 3,4-dihydroxy-2-butanone 4-phosphate. This chain is 3,4-dihydroxy-2-butanone 4-phosphate synthase, found in Proteus mirabilis (strain HI4320).